Consider the following 117-residue polypeptide: Immunoglobulin heavy variable 1-3 (117 aa).

Residues methionine 1–serine 19 form the signal peptide. The tract at residues glutamine 20–serine 44 is framework-1. Residues glutamine 20 to arginine 117 enclose the Ig-like domain. The cysteines at positions 41 and 115 are disulfide-linked. The complementarity-determining-1 stretch occupies residues glycine 45 to alanine 52. A framework-2 region spans residues methionine 53–tryptophan 69. Residues isoleucine 70 to threonine 77 form a complementarity-determining-2 region. The tract at residues lysine 78 to cysteine 115 is framework-3. The complementarity-determining-3 stretch occupies residues alanine 116–arginine 117.

In terms of assembly, immunoglobulins are composed of two identical heavy chains and two identical light chains; disulfide-linked.

Its subcellular location is the secreted. The protein localises to the cell membrane. Its function is as follows. V region of the variable domain of immunoglobulin heavy chains that participates in the antigen recognition. Immunoglobulins, also known as antibodies, are membrane-bound or secreted glycoproteins produced by B lymphocytes. In the recognition phase of humoral immunity, the membrane-bound immunoglobulins serve as receptors which, upon binding of a specific antigen, trigger the clonal expansion and differentiation of B lymphocytes into immunoglobulins-secreting plasma cells. Secreted immunoglobulins mediate the effector phase of humoral immunity, which results in the elimination of bound antigens. The antigen binding site is formed by the variable domain of one heavy chain, together with that of its associated light chain. Thus, each immunoglobulin has two antigen binding sites with remarkable affinity for a particular antigen. The variable domains are assembled by a process called V-(D)-J rearrangement and can then be subjected to somatic hypermutations which, after exposure to antigen and selection, allow affinity maturation for a particular antigen. In Homo sapiens (Human), this protein is Immunoglobulin heavy variable 1-3.